Here is a 160-residue protein sequence, read N- to C-terminus: Transmembrane protein 220 (160 aa).

The next 5 helical transmembrane spans lie at P3 to V23, A30 to N50, I62 to L82, G100 to G120, and L125 to N145.

The protein resides in the membrane. In Homo sapiens (Human), this protein is Transmembrane protein 220 (TMEM220).